Here is a 329-residue protein sequence, read N- to C-terminus: Minor capsid protein A1 (329 aa).

It is found in the virion. Minor capsid protein. The chain is Minor capsid protein A1 from Escherichia coli (Bacteriophage Q-beta).